A 421-amino-acid polypeptide reads, in one-letter code: Synaptotagmin-1 (421 aa).

Positions 1–40 are disordered; it reads MVSESHHEALAAPPATTVAAAPPSNVTEPASPGGGGGKED. Residues 1-60 are Vesicular-facing; it reads MVSESHHEALAAPPATTVAAAPPSNVTEPASPGGGGGKEDAFSKLKEKFMNELNKIPLPP. The segment covering 10-23 has biased composition (low complexity); that stretch reads LAAPPATTVAAAPP. N-linked (GlcNAc...) asparagine glycosylation is present at N25. Residues 61–81 traverse the membrane as a helical segment; it reads WALIAIAIVAVLLILTCCFCL. 5 S-palmitoyl cysteine lipidation sites follow: C77, C78, C80, C82, and C85. Residues 82–421 are Cytoplasmic-facing; sequence CKKCLFKKKN…EVDAMLAVKK (340 aa). Residues 94–139 form a disordered region; sequence KGKEKGGKNAINMKDVKDLGKTMKDQDDDAETGLTDGEEKEEPKEV. Residues 107–118 show a composition bias toward basic and acidic residues; the sequence is KDVKDLGKTMKD. The span at 119–133 shows a compositional bias: acidic residues; sequence QDDDAETGLTDGEEK. Positions 135 to 381 are phospholipid binding; the sequence is EPKEVEKLGK…AIGKVFVGYN (247 aa). C2 domains follow at residues 141–260 and 272–405; these read KLGK…EEWR and KLGD…AQWH. Ca(2+) contacts are provided by L171, D172, D178, D230, F231, D232, S235, K236, D238, D303, D309, D363, D365, and D371.

The protein belongs to the synaptotagmin family. Homotetramer. Ca(2+) is required as a cofactor.

It is found in the cytoplasmic vesicle. The protein resides in the secretory vesicle membrane. Its subcellular location is the secretory vesicle. It localises to the synaptic vesicle membrane. The protein localises to the chromaffin granule membrane. It is found in the cytoplasm. Its function is as follows. Calcium sensor that participates in triggering neurotransmitter release at the synapse. May have a regulatory role in the membrane interactions during trafficking of synaptic vesicles at the active zone of the synapse. It binds acidic phospholipids with a specificity that requires the presence of both an acidic head group and a diacyl backbone. May play a role in dendrite formation by melanocytes. May play a role in regulating the secretion of hormones relevant to the reproduction and egg-laying of female geese. The sequence is that of Synaptotagmin-1 from Anser cygnoides (Swan goose).